Here is a 299-residue protein sequence, read N- to C-terminus: Oxygen-dependent coproporphyrinogen-III oxidase (299 aa).

Ser92 provides a ligand contact to substrate. A divalent metal cation is bound by residues His96 and His106. Catalysis depends on His106, which acts as the Proton donor. 108–110 (NVR) contacts substrate. A divalent metal cation-binding residues include His145 and His175. Positions 240–275 (YVEFNLVWDRGTLFGLQTGGRTESILMSMPPLVRWE) are important for dimerization. 258-260 (GGR) contacts substrate.

It belongs to the aerobic coproporphyrinogen-III oxidase family. In terms of assembly, homodimer. A divalent metal cation serves as cofactor.

The protein resides in the cytoplasm. It carries out the reaction coproporphyrinogen III + O2 + 2 H(+) = protoporphyrinogen IX + 2 CO2 + 2 H2O. The protein operates within porphyrin-containing compound metabolism; protoporphyrin-IX biosynthesis; protoporphyrinogen-IX from coproporphyrinogen-III (O2 route): step 1/1. Involved in the heme biosynthesis. Catalyzes the aerobic oxidative decarboxylation of propionate groups of rings A and B of coproporphyrinogen-III to yield the vinyl groups in protoporphyrinogen-IX. This Citrobacter koseri (strain ATCC BAA-895 / CDC 4225-83 / SGSC4696) protein is Oxygen-dependent coproporphyrinogen-III oxidase.